The primary structure comprises 174 residues: uncharacterized protein (174 aa).

This is an uncharacterized protein from Acidianus convivator (ABV).